The chain runs to 239 residues: tRNA (guanine-N(7)-)-methyltransferase (239 aa).

S-adenosyl-L-methionine is bound by residues Glu-69, Glu-94, Asp-121, and Asp-144. Residue Asp-144 is part of the active site. Position 148 (Lys-148) interacts with substrate. An interaction with RNA region spans residues 150–155 (RHNKRR). Substrate is bound by residues Asp-180 and 217-220 (TKFE).

Belongs to the class I-like SAM-binding methyltransferase superfamily. TrmB family. In terms of assembly, monomer.

It catalyses the reaction guanosine(46) in tRNA + S-adenosyl-L-methionine = N(7)-methylguanosine(46) in tRNA + S-adenosyl-L-homocysteine. The protein operates within tRNA modification; N(7)-methylguanine-tRNA biosynthesis. In terms of biological role, catalyzes the formation of N(7)-methylguanine at position 46 (m7G46) in tRNA. The chain is tRNA (guanine-N(7)-)-methyltransferase from Yersinia enterocolitica serotype O:8 / biotype 1B (strain NCTC 13174 / 8081).